A 199-amino-acid chain; its full sequence is Small ribosomal subunit protein uS2 (199 aa).

The protein belongs to the universal ribosomal protein uS2 family.

The chain is Small ribosomal subunit protein uS2 (rps2) from Thermoplasma acidophilum (strain ATCC 25905 / DSM 1728 / JCM 9062 / NBRC 15155 / AMRC-C165).